The chain runs to 284 residues: Phosphatidylglycerol--prolipoprotein diacylglyceryl transferase (284 aa).

7 helical membrane passes run 14–34, 62–82, 106–126, 136–156, 190–210, 218–238, and 252–272; these read IAFSLGSIEVHWYGLAYACAI, YFLWAELGIVLGARIGYILIY, FVGIRGMSYHGGLVGFLIASY, LLIYLDLIAISLPLGYVFGRI, PSQLIEAFLEGVIVFLMVMWA, GLLIVVYGLGYSLMRFIAEFY, and LSMGQILSLFMVIVSLGILLY. Arginine 155 contributes to the a 1,2-diacyl-sn-glycero-3-phospho-(1'-sn-glycerol) binding site.

This sequence belongs to the Lgt family.

It is found in the cell inner membrane. It catalyses the reaction L-cysteinyl-[prolipoprotein] + a 1,2-diacyl-sn-glycero-3-phospho-(1'-sn-glycerol) = an S-1,2-diacyl-sn-glyceryl-L-cysteinyl-[prolipoprotein] + sn-glycerol 1-phosphate + H(+). The protein operates within protein modification; lipoprotein biosynthesis (diacylglyceryl transfer). Functionally, catalyzes the transfer of the diacylglyceryl group from phosphatidylglycerol to the sulfhydryl group of the N-terminal cysteine of a prolipoprotein, the first step in the formation of mature lipoproteins. The sequence is that of Phosphatidylglycerol--prolipoprotein diacylglyceryl transferase from Helicobacter pylori (strain ATCC 700392 / 26695) (Campylobacter pylori).